We begin with the raw amino-acid sequence, 190 residues long: Dual-action ribosomal maturation protein DarP (190 aa).

A disordered region spans residues M1–H31.

It belongs to the DarP family.

The protein resides in the cytoplasm. Functionally, member of a network of 50S ribosomal subunit biogenesis factors which assembles along the 30S-50S interface, preventing incorrect 23S rRNA structures from forming. Promotes peptidyl transferase center (PTC) maturation. This is Dual-action ribosomal maturation protein DarP from Aromatoleum aromaticum (strain DSM 19018 / LMG 30748 / EbN1) (Azoarcus sp. (strain EbN1)).